The following is a 261-amino-acid chain: Enolase-phosphatase E1 (261 aa).

Mg(2+)-binding residues include D16 and E18. Substrate-binding positions include 153–154 and K187; that span reads SS. Residue D212 participates in Mg(2+) binding.

It belongs to the HAD-like hydrolase superfamily. MasA/MtnC family. Monomer. Requires Mg(2+) as cofactor.

The protein localises to the cytoplasm. It localises to the nucleus. It catalyses the reaction 5-methylsulfanyl-2,3-dioxopentyl phosphate + H2O = 1,2-dihydroxy-5-(methylsulfanyl)pent-1-en-3-one + phosphate. It participates in amino-acid biosynthesis; L-methionine biosynthesis via salvage pathway; L-methionine from S-methyl-5-thio-alpha-D-ribose 1-phosphate: step 3/6. The protein operates within amino-acid biosynthesis; L-methionine biosynthesis via salvage pathway; L-methionine from S-methyl-5-thio-alpha-D-ribose 1-phosphate: step 4/6. Functionally, bifunctional enzyme that catalyzes the enolization of 2,3-diketo-5-methylthiopentyl-1-phosphate (DK-MTP-1-P) into the intermediate 2-hydroxy-3-keto-5-methylthiopentenyl-1-phosphate (HK-MTPenyl-1-P), which is then dephosphorylated to form the acireductone 1,2-dihydroxy-3-keto-5-methylthiopentene (DHK-MTPene). This Salmo salar (Atlantic salmon) protein is Enolase-phosphatase E1 (enoph1).